The following is a 215-amino-acid chain: Enolase-phosphatase E1 (215 aa).

Residues aspartate 11 and glutamate 13 each coordinate Mg(2+). Substrate is bound by residues 117-118 and lysine 151; that span reads SS. Aspartate 174 is a binding site for Mg(2+).

Belongs to the HAD-like hydrolase superfamily. MasA/MtnC family. In terms of assembly, monomer. Mg(2+) serves as cofactor.

The protein resides in the cytoplasm. It localises to the nucleus. It catalyses the reaction 5-methylsulfanyl-2,3-dioxopentyl phosphate + H2O = 1,2-dihydroxy-5-(methylsulfanyl)pent-1-en-3-one + phosphate. It participates in amino-acid biosynthesis; L-methionine biosynthesis via salvage pathway; L-methionine from S-methyl-5-thio-alpha-D-ribose 1-phosphate: step 3/6. The protein operates within amino-acid biosynthesis; L-methionine biosynthesis via salvage pathway; L-methionine from S-methyl-5-thio-alpha-D-ribose 1-phosphate: step 4/6. In terms of biological role, bifunctional enzyme that catalyzes the enolization of 2,3-diketo-5-methylthiopentyl-1-phosphate (DK-MTP-1-P) into the intermediate 2-hydroxy-3-keto-5-methylthiopentenyl-1-phosphate (HK-MTPenyl-1-P), which is then dephosphorylated to form the acireductone 1,2-dihydroxy-3-keto-5-methylthiopentene (DHK-MTPene). The protein is Enolase-phosphatase E1 (utr4) of Schizosaccharomyces japonicus (strain yFS275 / FY16936) (Fission yeast).